Here is a 307-residue protein sequence, read N- to C-terminus: Agmatinase (307 aa).

Mn(2+) is bound by residues histidine 128, aspartate 151, histidine 153, aspartate 155, aspartate 232, and aspartate 234.

It belongs to the arginase family. Agmatinase subfamily. Mn(2+) is required as a cofactor.

The enzyme catalyses agmatine + H2O = urea + putrescine. Its pathway is amine and polyamine biosynthesis; putrescine biosynthesis via agmatine pathway; putrescine from agmatine: step 1/1. Catalyzes the formation of putrescine from agmatine. The polypeptide is Agmatinase (Neisseria gonorrhoeae (strain ATCC 700825 / FA 1090)).